The primary structure comprises 757 residues: Xaa-Pro dipeptidyl-peptidase (757 aa).

Residues Ser-348, Asp-468, and His-498 each act as charge relay system in the active site.

This sequence belongs to the peptidase S15 family. As to quaternary structure, homodimer.

The protein resides in the cytoplasm. The enzyme catalyses Hydrolyzes Xaa-Pro-|- bonds to release unblocked, N-terminal dipeptides from substrates including Ala-Pro-|-p-nitroanilide and (sequentially) Tyr-Pro-|-Phe-Pro-|-Gly-Pro-|-Ile.. In terms of biological role, removes N-terminal dipeptides sequentially from polypeptides having unsubstituted N-termini provided that the penultimate residue is proline. The sequence is that of Xaa-Pro dipeptidyl-peptidase from Streptococcus pneumoniae (strain Hungary19A-6).